The chain runs to 346 residues: Histidinol-phosphate aminotransferase (346 aa).

The residue at position 209 (Lys209) is an N6-(pyridoxal phosphate)lysine.

This sequence belongs to the class-II pyridoxal-phosphate-dependent aminotransferase family. Histidinol-phosphate aminotransferase subfamily. As to quaternary structure, homodimer. Pyridoxal 5'-phosphate is required as a cofactor.

The catalysed reaction is L-histidinol phosphate + 2-oxoglutarate = 3-(imidazol-4-yl)-2-oxopropyl phosphate + L-glutamate. It participates in amino-acid biosynthesis; L-histidine biosynthesis; L-histidine from 5-phospho-alpha-D-ribose 1-diphosphate: step 7/9. The polypeptide is Histidinol-phosphate aminotransferase (Vibrio cholerae serotype O1 (strain ATCC 39315 / El Tor Inaba N16961)).